A 177-amino-acid chain; its full sequence is MGDPRRLSKTYDTPNHPWIGERIKQERELSNKYGLSNKKEIWKMETRLRTFRRQARKLISDTSAQGEKEAVQLFGILNRYGILLKEDATLDDVLSLNLESILERRLQTLVFRKGLANTPKQARQFIVHGHIAVNGKKINAPSYLVPLVEEDAISYMPNSPMASESHPERTDSVKDAE.

The region spanning 104–168 is the S4 RNA-binding domain; it reads RRLQTLVFRK…SPMASESHPE (65 aa). A disordered region spans residues 157–177; the sequence is PNSPMASESHPERTDSVKDAE. Basic and acidic residues predominate over residues 165 to 177; sequence SHPERTDSVKDAE.

This sequence belongs to the universal ribosomal protein uS4 family. In terms of assembly, part of the 30S ribosomal subunit. Contacts protein S5. The interaction surface between S4 and S5 is involved in control of translational fidelity.

Its function is as follows. One of the primary rRNA binding proteins, it binds directly to 16S rRNA where it nucleates assembly of the body of the 30S subunit. In terms of biological role, with S5 and S12 plays an important role in translational accuracy. The polypeptide is Small ribosomal subunit protein uS4 (Methanococcus aeolicus (strain ATCC BAA-1280 / DSM 17508 / OCM 812 / Nankai-3)).